We begin with the raw amino-acid sequence, 154 residues long: Transcriptional repressor NrdR (154 aa).

A zinc finger lies at 3–34 (CPFCGNDETKVLESRQVEEGTAVRRRRECERC). Positions 49 to 139 (LIVVKKDGRR…VYREFKDVQR (91 aa)) constitute an ATP-cone domain.

Belongs to the NrdR family. The cofactor is Zn(2+).

Its function is as follows. Negatively regulates transcription of bacterial ribonucleotide reductase nrd genes and operons by binding to NrdR-boxes. This chain is Transcriptional repressor NrdR, found in Desulfitobacterium hafniense (strain DSM 10664 / DCB-2).